A 441-amino-acid polypeptide reads, in one-letter code: Protein C-ets-1 (441 aa).

An N6-acetyllysine; alternate mark is found at Lys8 and Lys15. Residues Lys8 and Lys15 each participate in a glycyl lysine isopeptide (Lys-Gly) (interchain with G-Cter in SUMO2); alternate cross-link. A Glycyl lysine isopeptide (Lys-Gly) (interchain with G-Cter in SUMO); alternate cross-link involves residue Lys15. Thr38 carries the phosphothreonine; by MAPK modification. Residues 51–136 (ATFSGFTKEQ…EHLEILQKED (86 aa)) form the PNT domain. Residues 130–243 (EILQKEDVKP…DNMCMGRASR (114 aa)) form an activation domain; required for transcription activation region. A Glycyl lysine isopeptide (Lys-Gly) (interchain with G-Cter in SUMO2) cross-link involves residue Lys138. Tyr223 carries the phosphotyrosine modification. Residue Lys227 forms a Glycyl lysine isopeptide (Lys-Gly) (interchain with G-Cter in SUMO) linkage. Ser251 and Ser254 each carry phosphoserine. Position 265 is a phosphothreonine (Thr265). Phosphoserine is present on residues Ser267, Ser270, Ser282, and Ser285. A helix HI-1 region spans residues 304 to 312 (FKDYVRDRA). Lys305 carries the N6-acetyllysine modification. The helix HI-2 stretch occupies residues 323 to 330 (AAALAGYT). Residues 335–415 (IQLWQFLLEL…AGKRYVYRFV (81 aa)) constitute a DNA-binding region (ETS). The helix H4 stretch occupies residues 418–422 (LQSLL). The tract at residues 426–432 (PEELHAM) is helix H5.

Belongs to the ETS family. As to quaternary structure, binds DNA as a homodimer; homodimerization is required for transcription activation. Interacts with MAF and MAFB. Interacts with PAX5; the interaction alters DNA-binding properties. Interacts with DAXX. Interacts with UBE2I. Interacts with SP100; the interaction is direct and modulates ETS1 transcriptional activity. Post-translationally, sumoylated on Lys-15 and Lys-227, preferentially with SUMO2; which inhibits transcriptional activity. Ubiquitinated; which induces proteasomal degradation. In terms of processing, phosphorylation at Ser-251, Ser-282 and Ser-285 by CaMK2/CaMKII in response to calcium signaling decreases affinity for DNA: an increasing number of phosphoserines causes DNA-binding to become progressively weaker.

It localises to the nucleus. The protein resides in the cytoplasm. Autoinhibited by a module composed of four alpha helices (HI-1, HI-2, H4, and H5) that flank the DNA-binding ETS domain, reducing the affinity for DNA. Phosphorylation by CaMK2/CaMKII in response to calcium signaling decreases affinity for DNA. Transcription factor. Directly controls the expression of cytokine and chemokine genes in a wide variety of different cellular contexts. May control the differentiation, survival and proliferation of lymphoid cells. May also regulate angiogenesis through regulation of expression of genes controlling endothelial cell migration and invasion. The chain is Protein C-ets-1 (Ets1) from Rattus norvegicus (Rat).